Consider the following 457-residue polypeptide: MQKYIKEARSLLALGIPVIIAQFSQTAMGVVDTVMAGAVNATEMSAVAVGTSIWLPTILLGQGILMALTPIVAQLNGSGQRKHIANRTQQGFWLATFLSIMVIAILYNSRFIIEAQHDIEPELAEKAIGFIHAIMWGAPGCLYYQVLRSQCEGLSKTKPGMIIGFIGLLINIPVNYAFIYGKFGAPQLGGIGCGVATASVFWAMFLMMRYYVRRAPTQRDVMPKKRLVLPEFHTIKRITLLGLPVGLALFFEVTLFAVVALLVSPLGVTAVASHQIALNFSSLMFMFPLSLGIAATIRVGYNLGQRSTEQARTSAITALAVGLMLASCTAIFSIIFREKIALMYNDNIEVVTLASHLMLFAALYQLSDSVQVIGSGVLRGYKDTRSIFFITFIAYWVIGLPSGYLLGRTDYIVEAMGPAGFWIGFILGLTASAIMMGTRIWWIQRQSDEVVLLRSER.

The next 12 membrane-spanning stretches (helical) occupy residues 11–31 (LLALGIPVIIAQFSQTAMGVV), 53–73 (IWLPTILLGQGILMALTPIVA), 93–113 (WLATFLSIMVIAILYNSRFII), 127–147 (AIGFIHAIMWGAPGCLYYQVL), 160–180 (GMIIGFIGLLINIPVNYAFIY), 188–208 (LGGIGCGVATASVFWAMFLMM), 243–263 (LPVGLALFFEVTLFAVVALLV), 276–296 (IALNFSSLMFMFPLSLGIAAT), 316–336 (ITALAVGLMLASCTAIFSIIF), 357–377 (LMLFAALYQLSDSVQVIGSGV), 387–407 (IFFITFIAYWVIGLPSGYLLG), and 416–436 (MGPAGFWIGFILGLTASAIMM).

Belongs to the multi antimicrobial extrusion (MATE) (TC 2.A.66.1) family. MdtK subfamily.

The protein resides in the cell inner membrane. Its function is as follows. Multidrug efflux pump that functions probably as a Na(+)/drug antiporter. In Proteus mirabilis (strain HI4320), this protein is Multidrug resistance protein MdtK.